The chain runs to 150 residues: UPF0208 membrane protein VIBHAR_02941 (150 aa).

2 consecutive transmembrane segments (helical) span residues 42 to 62 and 70 to 90; these read FGIKVMPAVAAISVLTQMAFN and AIVVALFAISMPLQGMWWLGS.

The protein belongs to the UPF0208 family.

The protein resides in the cell inner membrane. The chain is UPF0208 membrane protein VIBHAR_02941 from Vibrio campbellii (strain ATCC BAA-1116).